We begin with the raw amino-acid sequence, 222 residues long: Eukaryotic translation initiation factor 3 subunit K (222 aa).

The PCI domain occupies 46 to 208; it reads YDLEANLAVL…KIKTKNITEK (163 aa).

The protein belongs to the eIF-3 subunit K family. Component of the eukaryotic translation initiation factor 3 (eIF-3) complex. The eIF-3 complex interacts with pix.

The protein resides in the cytoplasm. In terms of biological role, component of the eukaryotic translation initiation factor 3 (eIF-3) complex, which is involved in protein synthesis of a specialized repertoire of mRNAs and, together with other initiation factors, stimulates binding of mRNA and methionyl-tRNAi to the 40S ribosome. The eIF-3 complex specifically targets and initiates translation of a subset of mRNAs involved in cell proliferation. In Drosophila ananassae (Fruit fly), this protein is Eukaryotic translation initiation factor 3 subunit K.